Here is a 515-residue protein sequence, read N- to C-terminus: Maturase K (515 aa).

This sequence belongs to the intron maturase 2 family. MatK subfamily.

Its subcellular location is the plastid. The protein localises to the chloroplast. In terms of biological role, usually encoded in the trnK tRNA gene intron. Probably assists in splicing its own and other chloroplast group II introns. The polypeptide is Maturase K (Pinus armandii (Chinese white pine)).